The following is a 474-amino-acid chain: Homeobox protein PKNOX2 (474 aa).

The segment at 1 to 42 (MMQHASPAPALTMMATQNVPPPPYQDSPQMTATAQPPSKAQA) is disordered. Polar residues predominate over residues 26-38 (DSPQMTATAQPPS). The MEIS N-terminal domain maps to 96–179 (GSECITSASF…MHSDNLLRND (84 aa)). Residues 291–350 (KRGVLPKHATNIMRSWLFQHLMHPYPTEDEKRQIAAQTNLTLLQVNNWFINARRRILQPM) constitute a DNA-binding region (homeobox). 3 disordered regions span residues 351-371 (LDAS…QHRP), 385-405 (LQQQ…LDNL), and 423-474 (AAHD…DSLE). The segment covering 361–371 (KAKKIKSQHRP) has biased composition (basic residues). Over residues 429-456 (LDGTEEEDEDDMEEEEEEEEELEEEADE) the composition is skewed to acidic residues.

It belongs to the TALE/MEIS homeobox family.

Its subcellular location is the nucleus. In Mus musculus (Mouse), this protein is Homeobox protein PKNOX2 (Pknox2).